Here is a 286-residue protein sequence, read N- to C-terminus: 5'-3' exonuclease (286 aa).

Residues 172–270 enclose the 5'-3' exonuclease domain; the sequence is IKPKEFIDFL…IKLKDIILKK (99 aa).

In terms of biological role, 5'-3' exonuclease acting preferentially on double-stranded DNA. This is 5'-3' exonuclease from Buchnera aphidicola subsp. Acyrthosiphon pisum (strain APS) (Acyrthosiphon pisum symbiotic bacterium).